The sequence spans 386 residues: Succinate--CoA ligase [ADP-forming] subunit beta (386 aa).

The 236-residue stretch at 9–244 (KELLKQFGVP…LDEEDPAEIE (236 aa)) folds into the ATP-grasp domain. ATP-binding positions include Lys46, 53–55 (GRG), Glu99, Ala102, and Glu107. 2 residues coordinate Mg(2+): Asn199 and Asp213. Substrate contacts are provided by residues Asn264 and 321-323 (GIM).

Belongs to the succinate/malate CoA ligase beta subunit family. In terms of assembly, heterotetramer of two alpha and two beta subunits. Mg(2+) serves as cofactor.

The enzyme catalyses succinate + ATP + CoA = succinyl-CoA + ADP + phosphate. It carries out the reaction GTP + succinate + CoA = succinyl-CoA + GDP + phosphate. Its pathway is carbohydrate metabolism; tricarboxylic acid cycle; succinate from succinyl-CoA (ligase route): step 1/1. In terms of biological role, succinyl-CoA synthetase functions in the citric acid cycle (TCA), coupling the hydrolysis of succinyl-CoA to the synthesis of either ATP or GTP and thus represents the only step of substrate-level phosphorylation in the TCA. The beta subunit provides nucleotide specificity of the enzyme and binds the substrate succinate, while the binding sites for coenzyme A and phosphate are found in the alpha subunit. This Bordetella avium (strain 197N) protein is Succinate--CoA ligase [ADP-forming] subunit beta.